We begin with the raw amino-acid sequence, 137 residues long: Universal stress protein HP_0031 (137 aa).

This sequence belongs to the universal stress protein A family.

The protein is Universal stress protein HP_0031 of Helicobacter pylori (strain ATCC 700392 / 26695) (Campylobacter pylori).